The sequence spans 134 residues: ATP synthase epsilon chain, chloroplastic (134 aa).

It belongs to the ATPase epsilon chain family. F-type ATPases have 2 components, CF(1) - the catalytic core - and CF(0) - the membrane proton channel. CF(1) has five subunits: alpha(3), beta(3), gamma(1), delta(1), epsilon(1). CF(0) has three main subunits: a, b and c.

It localises to the plastid. It is found in the chloroplast thylakoid membrane. Functionally, produces ATP from ADP in the presence of a proton gradient across the membrane. The protein is ATP synthase epsilon chain, chloroplastic of Amborella trichopoda.